We begin with the raw amino-acid sequence, 264 residues long: Signal peptidase I (264 aa).

Residues 1 to 18 (MNRDNINSNKTVKQEFGS) lie on the Cytoplasmic side of the membrane. A helical membrane pass occupies residues 19 to 39 (FAFVICIALVIRILIMEPFTV). Topologically, residues 40 to 264 (PTGSMKATIL…IFKNLYNVDE (225 aa)) are extracellular. Catalysis depends on residues serine 43 and lysine 106.

It belongs to the peptidase S26 family.

It localises to the cell membrane. It catalyses the reaction Cleavage of hydrophobic, N-terminal signal or leader sequences from secreted and periplasmic proteins.. In Rickettsia prowazekii (strain Madrid E), this protein is Signal peptidase I (lepB).